The following is a 247-amino-acid chain: Carboxy-S-adenosyl-L-methionine synthase (247 aa).

Residues Tyr-40, 65–67, 90–91, 122–123, Asn-137, and Arg-204 contribute to the S-adenosyl-L-methionine site; these read GCS, DN, and DI.

Belongs to the class I-like SAM-binding methyltransferase superfamily. Cx-SAM synthase family. In terms of assembly, homodimer.

The enzyme catalyses prephenate + S-adenosyl-L-methionine = carboxy-S-adenosyl-L-methionine + 3-phenylpyruvate + H2O. In terms of biological role, catalyzes the conversion of S-adenosyl-L-methionine (SAM) to carboxy-S-adenosyl-L-methionine (Cx-SAM). This is Carboxy-S-adenosyl-L-methionine synthase from Stutzerimonas stutzeri (strain A1501) (Pseudomonas stutzeri).